The chain runs to 285 residues: (3S)-malyl-CoA thioesterase (285 aa).

Arg70 and Glu122 together coordinate substrate. Positions 122 and 148 each coordinate Mg(2+).

Belongs to the HpcH/HpaI aldolase family. As to quaternary structure, homodimer or homotrimer. Requires Mg(2+) as cofactor.

It catalyses the reaction (S)-malyl-CoA + H2O = (S)-malate + CoA + H(+). Catalyzes the hydrolysis of (3S)-malyl-CoA to (3S)-malate and free CoA. Inactive towards beta-methylmalyl-CoA and other CoA esters. This chain is (3S)-malyl-CoA thioesterase, found in Cereibacter sphaeroides (strain ATCC 17029 / ATH 2.4.9) (Rhodobacter sphaeroides).